A 105-amino-acid polypeptide reads, in one-letter code: Wound-induced protein 1 (105 aa).

This sequence to potato anionic peroxidase. In terms of tissue distribution, ubiquitous.

This is Wound-induced protein 1 (WUN1) from Solanum tuberosum (Potato).